The chain runs to 329 residues: Minor capsid protein A1 (329 aa).

The protein localises to the virion. Minor capsid protein. The protein is Minor capsid protein A1 of Escherichia coli (Bacteriophage Q-beta).